The chain runs to 1734 residues: Gag-pol polyprotein (1734 aa).

Residue Gly-2 is the site of N-myristoyl glycine; by host attachment. A PTAP/PSAP motif motif is present at residues Pro-109–Pro-112. Residues Pro-112–Arg-217 are disordered. The LYPX(n)L motif motif lies at Leu-128 to Phe-132. The PPXY motif signature appears at Pro-161–Tyr-164. Ser-191 is subject to Phosphoserine; by host. Residues Gly-344–Val-392 are interaction with host PIAS4. Residues Ile-429–Glu-434 form an interaction with host UBE2I region. Composition is skewed to basic and acidic residues over residues Arg-433–Ser-474 and Arg-485–Leu-498. Disordered regions lie at residues Arg-433 to Leu-498 and Trp-512 to Ile-551. The CCHC-type zinc finger occupies Asp-501–Lys-518. The Peptidase A2 domain occupies Val-560–Leu-630. Residue Asp-565 is the Protease; shared with dimeric partner of the active site. Residues Leu-740–Leu-931 enclose the Reverse transcriptase domain. Mg(2+)-binding residues include Asp-808, Asp-882, Asp-883, Asp-1182, Glu-1220, Asp-1241, and Asp-1311. Residues Pro-1173 to Ile-1319 enclose the RNase H type-1 domain. The HHCC-type zinc-finger motif lies at His-1386 to Cys-1426. An Integrase catalytic domain is found at Arg-1443–Pro-1601. Mg(2+) is bound by residues Asp-1454 and Asp-1513.

Homohexamer; further associates as homomultimer. The virus core is composed of a lattice formed from hexagonal rings, each containing six capsid monomers. Interacts with mouse UBE2I and mouse PIAS4. In terms of assembly, interacts (via PPXY motif) with host NEDD4. Interacts (via PSAP motif) with host TSG101. Interacts (via LYPX(n)L motif) with host PDCD6IP. As to quaternary structure, the reverse transcriptase is a monomer (Potential). Interacts (via RNase domains) with host release factor ETF1; this interaction is essential for translational readthrough of amber codon between viral gag and pol genes, as well as for viral replication. Homodimer. Mg(2+) is required as a cofactor. Ubiquitinated by ITCH. Gag can recruit the ubiquitin ligase Itch in an L domain-independent manner to facilitate virus release via a mechanism that involves Gag ubiquitination. In terms of processing, specific enzymatic cleavages by the viral protease yield mature proteins. The protease is released by autocatalytic cleavage. The polyprotein is cleaved during and after budding, this process is termed maturation. Post-translationally, sumoylated; which is required for virus replication. Phosphorylated on serine residues.

The protein localises to the virion. The protein resides in the host cell membrane. It is found in the host late endosome membrane. Its subcellular location is the host endosome. It localises to the host multivesicular body. The protein localises to the host cytoplasm. It catalyses the reaction DNA(n) + a 2'-deoxyribonucleoside 5'-triphosphate = DNA(n+1) + diphosphate. It carries out the reaction Endonucleolytic cleavage to 5'-phosphomonoester.. With respect to regulation, most efficiently inhibited by Amprenavir, which is able to block Gag-Pol processing in infected cells. Its function is as follows. Plays a role in budding and is processed by the viral protease during virion maturation outside the cell. During budding, it recruits, in a PPXY-dependent or independent manner, Nedd4-like ubiquitin ligases that conjugate ubiquitin molecules to Gag-Pol, or to Gag-Pol binding host factors. Interaction with HECT ubiquitin ligases probably links the viral protein to the host ESCRT pathway and facilitates release. In terms of biological role, targets Gag and gag-pol polyproteins to the plasma membrane via a multipartite membrane binding signal, that includes its myristoylated N-terminus. Also mediates nuclear localization of the pre-integration complex. Constituent of the pre-integration complex (PIC) which tethers the latter to mitotic chromosomes. This allows the integration of the viral genome into the host DNA. Functionally, forms the spherical core of the virion that encapsulates the genomic RNA-nucleocapsid complex. Its function is as follows. Involved in the packaging and encapsidation of two copies of the genome. Binds with high affinity to conserved UCUG elements within the packaging signal, located near the 5'-end of the genome. This binding is dependent on genome dimerization. Acts as a nucleic acid chaperone which is involved in rearrangement of nucleic acid secondary structures during gRNA retrotranscription. In terms of biological role, the aspartyl protease mediates proteolytic cleavages of Gag and Gag-Pol polyproteins during or shortly after the release of the virion from the plasma membrane. Cleavages take place as an ordered, step-wise cascade to yield mature proteins. This process is called maturation. Displays maximal activity during the budding process just prior to particle release from the cell (Potential). Cleaves the translation initiation factor eIF4G leading to the inhibition of host cap-dependent translation. RT is a multifunctional enzyme that converts the viral dimeric RNA genome into dsDNA in the cytoplasm, shortly after virus entry into the cell. This enzyme displays a DNA polymerase activity that can copy either DNA or RNA templates, and a ribonuclease H (RNase H) activity that cleaves the RNA strand of RNA-DNA heteroduplexes in a partially processive 3' to 5' endonucleasic mode. Conversion of viral genomic RNA into dsDNA requires many steps. A tRNA binds to the primer-binding site (PBS) situated at the 5' end of the viral RNA. RT uses the 3' end of the tRNA primer to perform a short round of RNA-dependent minus-strand DNA synthesis. The reading proceeds through the U5 region and ends after the repeated (R) region which is present at both ends of viral RNA. The portion of the RNA-DNA heteroduplex is digested by the RNase H, resulting in a ssDNA product attached to the tRNA primer. This ssDNA/tRNA hybridizes with the identical R region situated at the 3' end of viral RNA. This template exchange, known as minus-strand DNA strong stop transfer, can be either intra- or intermolecular. RT uses the 3' end of this newly synthesized short ssDNA to perform the RNA-dependent minus-strand DNA synthesis of the whole template. RNase H digests the RNA template except for a polypurine tract (PPT) situated at the 5' end of the genome. It is not clear if both polymerase and RNase H activities are simultaneous. RNase H probably can proceed both in a polymerase-dependent (RNA cut into small fragments by the same RT performing DNA synthesis) and a polymerase-independent mode (cleavage of remaining RNA fragments by free RTs). Secondly, RT performs DNA-directed plus-strand DNA synthesis using the PPT that has not been removed by RNase H as primers. PPT and tRNA primers are then removed by RNase H. The 3' and 5' ssDNA PBS regions hybridize to form a circular dsDNA intermediate. Strand displacement synthesis by RT to the PBS and PPT ends produces a blunt ended, linear dsDNA copy of the viral genome that includes long terminal repeats (LTRs) at both ends. Functionally, catalyzes viral DNA integration into the host chromosome, by performing a series of DNA cutting and joining reactions. This enzyme activity takes place after virion entry into a cell and reverse transcription of the RNA genome in dsDNA. The first step in the integration process is 3' processing. This step requires a complex comprising the viral genome, matrix protein and integrase. This complex is called the pre-integration complex (PIC). The integrase protein removes 2 nucleotides from each 3' end of the viral DNA, leaving recessed CA OH's at the 3' ends. In the second step that requires cell division, the PIC enters cell nucleus. In the third step, termed strand transfer, the integrase protein joins the previously processed 3' ends to the 5' ends of strands of target cellular DNA at the site of integration. The last step is viral DNA integration into host chromosome. The chain is Gag-pol polyprotein (gag-pol) from Mus musculus (Mouse).